The primary structure comprises 250 residues: DNA repair protein RecO (250 aa).

This sequence belongs to the RecO family.

In terms of biological role, involved in DNA repair and RecF pathway recombination. This is DNA repair protein RecO from Staphylococcus aureus (strain MRSA252).